A 767-amino-acid chain; its full sequence is U3 small nucleolar RNA-associated protein 14 homolog A (767 aa).

A disordered region spans residues T23–A49. 6 positions are modified to phosphoserine: S29, S31, S37, S52, S77, and S81. Residue K122 forms a Glycyl lysine isopeptide (Lys-Gly) (interchain with G-Cter in SUMO2) linkage. T205 bears the Phosphothreonine mark. Residues L317–E346 adopt a coiled-coil conformation. Residues Q338–M554 form a disordered region. Acidic residues predominate over residues E342–L355. Positions A398 to E433 are enriched in basic and acidic residues. R431 bears the Citrulline mark. K447 participates in a covalent cross-link: Glycyl lysine isopeptide (Lys-Gly) (interchain with G-Cter in SUMO2). Residue S451 is modified to Phosphoserine. The span at V486–P498 shows a compositional bias: acidic residues. The segment covering R503–R538 has biased composition (basic and acidic residues). K518 is covalently cross-linked (Glycyl lysine isopeptide (Lys-Gly) (interchain with G-Cter in SUMO2)). A Citrulline modification is found at R586. The segment at T730–G767 is disordered. Over residues Q753–G767 the composition is skewed to basic residues.

It belongs to the UTP14 family. In terms of assembly, interacts with DHX37. In terms of processing, citrullinated by PADI4. As to expression, ubiquitously expressed.

It is found in the nucleus. The protein localises to the nucleolus. May be required for ribosome biogenesis. In Mus musculus (Mouse), this protein is U3 small nucleolar RNA-associated protein 14 homolog A (Utp14a).